Consider the following 707-residue polypeptide: DNA ligase (707 aa).

Residues 1–23 form a disordered region; the sequence is MSSKATQDPEAVLAEQSDDATEA. NAD(+) contacts are provided by residues 53 to 57, 103 to 104, and glutamate 133; these read DAEFD and SL. The active-site N6-AMP-lysine intermediate is lysine 135. Positions 156, 196, 315, and 339 each coordinate NAD(+). Zn(2+)-binding residues include cysteine 433, cysteine 436, cysteine 452, and cysteine 458. One can recognise a BRCT domain in the interval 622 to 707; sequence SIERTLDGLS…LENGPDTPDS (86 aa).

The protein belongs to the NAD-dependent DNA ligase family. LigA subfamily. Requires Mg(2+) as cofactor. Mn(2+) serves as cofactor.

It carries out the reaction NAD(+) + (deoxyribonucleotide)n-3'-hydroxyl + 5'-phospho-(deoxyribonucleotide)m = (deoxyribonucleotide)n+m + AMP + beta-nicotinamide D-nucleotide.. In terms of biological role, DNA ligase that catalyzes the formation of phosphodiester linkages between 5'-phosphoryl and 3'-hydroxyl groups in double-stranded DNA using NAD as a coenzyme and as the energy source for the reaction. It is essential for DNA replication and repair of damaged DNA. In Mycolicibacterium vanbaalenii (strain DSM 7251 / JCM 13017 / BCRC 16820 / KCTC 9966 / NRRL B-24157 / PYR-1) (Mycobacterium vanbaalenii), this protein is DNA ligase.